The chain runs to 73 residues: Beta-defensin 40 (73 aa).

The N-terminal stretch at 1-23 is a signal peptide; sequence MKISCFLLMIFFLSCFQINPVAV. Cystine bridges form between Cys-29/Cys-58, Cys-36/Cys-51, and Cys-41/Cys-59.

It belongs to the beta-defensin family. In terms of tissue distribution, only expressed in epididymis (corpus, cauda and caput).

Its subcellular location is the secreted. Has antibacterial activity. This chain is Beta-defensin 40 (Defb40), found in Mus musculus (Mouse).